The sequence spans 432 residues: Diaminopimelate decarboxylase (432 aa).

Lys66 bears the N6-(pyridoxal phosphate)lysine mark. Pyridoxal 5'-phosphate-binding positions include Gly248 and 290 to 293 (EPGR). Residues Arg293, Arg330, and Tyr334 each contribute to the substrate site. Catalysis depends on Cys361, which acts as the Proton donor. Positions 362 and 390 each coordinate substrate. Position 390 (Tyr390) interacts with pyridoxal 5'-phosphate.

This sequence belongs to the Orn/Lys/Arg decarboxylase class-II family. LysA subfamily. As to quaternary structure, homodimer. Pyridoxal 5'-phosphate is required as a cofactor.

The enzyme catalyses meso-2,6-diaminopimelate + H(+) = L-lysine + CO2. Its pathway is amino-acid biosynthesis; L-lysine biosynthesis via DAP pathway; L-lysine from DL-2,6-diaminopimelate: step 1/1. Specifically catalyzes the decarboxylation of meso-diaminopimelate (meso-DAP) to L-lysine. This chain is Diaminopimelate decarboxylase, found in Bacillus methanolicus.